The chain runs to 519 residues: Cytochrome P450 52A12 (519 aa).

Heme is bound at residue C467.

This sequence belongs to the cytochrome P450 family. Requires heme as cofactor.

The protein resides in the membrane. Together with an NADPH cytochrome P450 the enzyme system catalyzes the terminal hydroxylation as the first step in the assimilation of alkanes and fatty acids. The chain is Cytochrome P450 52A12 (CYP52A12) from Debaryomyces hansenii (Yeast).